The following is an 87-amino-acid chain: U14-lycotoxin-Ls1a (87 aa).

The first 20 residues, 1 to 20, serve as a signal peptide directing secretion; it reads MNSKVFAALLLLALSTCVLS. The WAP domain maps to 21 to 66; it reads EKYCPTPRNTSCKKMNIRNNCCRDSDCTSNAFCCAEPCGNFCHKAS. Cystine bridges form between C24–C54, C32–C58, C41–C53, C42–C80, and C47–C62.

This sequence belongs to the venom protein 11 family. 01 (wap-1) subfamily. Post-translationally, contains 5 disulfide bonds. As to expression, expressed by the venom gland.

The protein resides in the secreted. Functionally, has antibacterial activity. This chain is U14-lycotoxin-Ls1a, found in Lycosa singoriensis (Wolf spider).